The primary structure comprises 673 residues: Leucine zipper putative tumor suppressor 3 (673 aa).

Disordered regions lie at residues 1-157, 172-239, and 251-317; these read MAKL…CSEP, FHSM…QHLA, and IGTA…PPSP. A compositionally biased stretch (basic and acidic residues) spans 79–92; it reads SRERPGRYPSEDKG. The segment covering 173–186 has biased composition (polar residues); the sequence is HSMQNLCPPQTNGT. Over residues 215–235 the composition is skewed to low complexity; it reads GLSDSGRNSLTSLPTYSSSYS. A compositionally biased stretch (gly residues) spans 258-269; it reads SGSGGSSGGGSG. Residues 274–294 show a composition bias toward low complexity; sequence GTSDSGRASSKSGSSSSMGRP. Gly residues predominate over residues 295–307; it reads GHLGSGEGGGGGL. Phosphoserine occurs at positions 316 and 318. 2 coiled-coil regions span residues 317–496 and 571–639; these read PSAL…SLRD and RALR…RLRE. Residues 635-673 form a disordered region; sequence RRLRERGAAGGASTPTPQHGEEKKAWTPSRLERIESTEI. The span at 653–673 shows a compositional bias: basic and acidic residues; the sequence is HGEEKKAWTPSRLERIESTEI.

This sequence belongs to the LZTS3 family. Interacts (via C-terminus) with SHANK3 (via PDZ domain). Interacts (via coiled coil) with SIPA1L1. Can form homooligomers.

The protein localises to the synapse. The protein resides in the postsynaptic density. Its subcellular location is the cell projection. It is found in the dendritic spine. It localises to the dendrite. The protein localises to the cytoplasm. The protein resides in the cytoskeleton. Its function is as follows. May be involved in promoting the maturation of dendritic spines, probably via regulating SIPA1L1 levels at the postsynaptic density of synapses. The protein is Leucine zipper putative tumor suppressor 3 of Homo sapiens (Human).